The sequence spans 135 residues: HTH-type transcriptional regulator CueR (135 aa).

One can recognise an HTH merR-type domain in the interval 1–69; it reads MNISDVAKIT…LEESGELVNL (69 aa). Positions 4–23 form a DNA-binding region, H-T-H motif; that stretch reads SDVAKITGLTSKAIRFYEEK. Cu(+) is bound by residues cysteine 112 and cysteine 120.

As to quaternary structure, homodimer.

It is found in the cytoplasm. Functionally, regulates the transcription of the copA and cueO genes. It detects cytoplasmic copper stress and activates transcription in response to increasing copper concentrations. The chain is HTH-type transcriptional regulator CueR (cueR) from Escherichia coli O6:H1 (strain CFT073 / ATCC 700928 / UPEC).